We begin with the raw amino-acid sequence, 219 residues long: Probable GTP-binding protein EngB (219 aa).

Residues 26–200 (EGVEIAFAGR…RAKLDTWFAP (175 aa)) form the EngB-type G domain. GTP is bound by residues 34 to 41 (GRSNAGKS), 61 to 65 (GRTQL), 79 to 82 (DLPG), 146 to 149 (TKAD), and 179 to 181 (FSS). The Mg(2+) site is built by Ser-41 and Thr-63.

It belongs to the TRAFAC class TrmE-Era-EngA-EngB-Septin-like GTPase superfamily. EngB GTPase family. It depends on Mg(2+) as a cofactor.

Its function is as follows. Necessary for normal cell division and for the maintenance of normal septation. The protein is Probable GTP-binding protein EngB of Vibrio parahaemolyticus serotype O3:K6 (strain RIMD 2210633).